A 134-amino-acid polypeptide reads, in one-letter code: Replication enhancer protein (134 aa).

It belongs to the geminiviridae replication enhancer protein family. In terms of assembly, homooligomer. Interacts with the replication-associated protein (REP). Interacts with host proliferating cell nuclear antigen (PCNA). Interacts with host retinoblastoma-related protein 1 (RBR1), and may thereby deregulate the host cell cycle. Oligomerization and interaction with PCNA are necessary for optimal replication enhancement.

In terms of biological role, increases viral DNA accumulation. Enhances infectivity and symptom expression. The chain is Replication enhancer protein from African cassava mosaic virus (isolate West Kenyan 844) (ACMV).